We begin with the raw amino-acid sequence, 255 residues long: Triosephosphate isomerase (255 aa).

Residue 9-11 (NWK) coordinates substrate. His-95 (electrophile) is an active-site residue. The active-site Proton acceptor is the Glu-167. Residues Gly-173, Ser-212, and 233–234 (GG) each bind substrate.

This sequence belongs to the triosephosphate isomerase family. As to quaternary structure, homodimer.

The protein resides in the cytoplasm. The enzyme catalyses D-glyceraldehyde 3-phosphate = dihydroxyacetone phosphate. The protein operates within carbohydrate biosynthesis; gluconeogenesis. It participates in carbohydrate degradation; glycolysis; D-glyceraldehyde 3-phosphate from glycerone phosphate: step 1/1. Involved in the gluconeogenesis. Catalyzes stereospecifically the conversion of dihydroxyacetone phosphate (DHAP) to D-glyceraldehyde-3-phosphate (G3P). This chain is Triosephosphate isomerase, found in Klebsiella pneumoniae.